Reading from the N-terminus, the 301-residue chain is Probable alpha-L-glutamate ligase (301 aa).

The ATP-grasp domain maps to 104–287; it reads LQLLSRRGIG…VAGIIIEHLE (184 aa). Residues Lys141, 178-179, Asp187, and 211-213 each bind ATP; these read EY and RSN. The Mg(2+) site is built by Asp248, Glu260, and Asn262. Mn(2+) contacts are provided by Asp248, Glu260, and Asn262.

The protein belongs to the RimK family. Mg(2+) is required as a cofactor. The cofactor is Mn(2+).

In Pseudomonas fluorescens (strain Pf0-1), this protein is Probable alpha-L-glutamate ligase.